A 155-amino-acid chain; its full sequence is Endoribonuclease YbeY (155 aa).

Zn(2+) contacts are provided by H120, H124, and H130.

The protein belongs to the endoribonuclease YbeY family. Requires Zn(2+) as cofactor.

It is found in the cytoplasm. In terms of biological role, single strand-specific metallo-endoribonuclease involved in late-stage 70S ribosome quality control and in maturation of the 3' terminus of the 16S rRNA. In Alkaliphilus metalliredigens (strain QYMF), this protein is Endoribonuclease YbeY.